Consider the following 443-residue polypeptide: UDP-glucuronic acid decarboxylase 4 (443 aa).

Position 2 is an N-acetylalanine (Ala-2). Over 2–43 (ASELTNRRHEIEQPEAESYYPKPIKPWFVAIRPIRYMLREQR) the chain is Cytoplasmic. Residues 44–64 (LVFVLVGIAIATLGFTIFSKS) form a helical; Signal-anchor for type II membrane protein membrane-spanning segment. Residues 65 to 443 (SNHQPIPYDV…DSSTTSSSTE (379 aa)) lie on the Lumenal side of the membrane. 151–176 (DNFFTGRKENVMHHFNNPNFEMIRHD) serves as a coordination point for NAD(+). Arg-260 is a substrate binding site. Tyr-263 acts as the Proton acceptor in catalysis. 263–267 (YDEGK) is an NAD(+) binding site. Residue Asn-292 coordinates substrate. Arg-304 provides a ligand contact to NAD(+). Substrate contacts are provided by residues 305-309 (VVSNF), 322-329 (YGDGKQTR), and 389-393 (DPHKR).

Belongs to the NAD(P)-dependent epimerase/dehydratase family. UDP-glucuronic acid decarboxylase subfamily. NAD(+) is required as a cofactor.

It localises to the golgi apparatus. The protein localises to the golgi stack membrane. It catalyses the reaction UDP-alpha-D-glucuronate + H(+) = UDP-alpha-D-xylose + CO2. The protein operates within nucleotide-sugar biosynthesis; UDP-alpha-D-xylose biosynthesis; UDP-alpha-D-xylose from UDP-alpha-D-glucuronate: step 1/1. Catalyzes the NAD-dependent decarboxylation of UDP-glucuronic acid to UDP-xylose. Necessary for the biosynthesis of the core tetrasaccharide in glycosaminoglycan biosynthesis. This Arabidopsis thaliana (Mouse-ear cress) protein is UDP-glucuronic acid decarboxylase 4 (UXS4).